We begin with the raw amino-acid sequence, 349 residues long: Interferon regulatory factor 2 (349 aa).

The segment at residues 5 to 113 (RMRMRPWLEE…NAFRVYRMLP (109 aa)) is a DNA-binding region (IRF tryptophan pentad repeat). Lys-75 and Lys-78 each carry N6-acetyllysine. Residues 117 to 148 (RPSKKGKKPKTEKEDKVKHIKQEPVESSLGLS) form a disordered region. Basic and acidic residues predominate over residues 125–140 (PKTEKEDKVKHIKQEP). Lys-137 participates in a covalent cross-link: Glycyl lysine isopeptide (Lys-Gly) (interchain with G-Cter in SUMO); alternate. Lys-137 participates in a covalent cross-link: Glycyl lysine isopeptide (Lys-Gly) (interchain with G-Cter in SUMO2); alternate. Residue Lys-166 forms a Glycyl lysine isopeptide (Lys-Gly) (interchain with G-Cter in SUMO) linkage. Ser-225 is modified (phosphoserine). Residues 228–239 (SSYAESETTDSV) show a composition bias toward polar residues. The disordered stretch occupies residues 228 to 251 (SSYAESETTDSVPSDEESAEGRPH). Residue Lys-260 forms a Glycyl lysine isopeptide (Lys-Gly) (interchain with G-Cter in SUMO2) linkage. Lys-293 participates in a covalent cross-link: Glycyl lysine isopeptide (Lys-Gly) (interchain with G-Cter in SUMO). Positions 297 to 349 (NPVPYNSSWPPFQDLPLSSSMTPASSSSRPDRETRASVIKKTSDITQARVKSC) are disordered. Residues 314–324 (SSSMTPASSSS) are compositionally biased toward low complexity.

It belongs to the IRF family. As to quaternary structure, interacts with BRD7, IRF2BP1 and IRF2BP2. Interacts with CREBBP in growing cells; the interaction acetylates IRF2 and regulates IRF2-dependent H4 promoter activity. In terms of processing, acetylated by CBP/ p300 during cell-growth. Acetylation on Lys-75 is required for stimulation of H4 promoter activity. Post-translationally, the major sites of sumoylation are Lys-137 and Lys-293. Sumoylation with SUMO1 increases its transcriptional repressor activity on IRF1 and diminishes its ability to activate ISRE and H4 promoter. Expressed throughout the epithelium of the colon. Also expressed in lamina propria.

Its subcellular location is the nucleus. Its function is as follows. Specifically binds to the upstream regulatory region of type I IFN and IFN-inducible MHC class I genes (the interferon consensus sequence (ICS)) and represses those genes. Also acts as an activator for several genes including H4 and IL7. Constitutively binds to the ISRE promoter to activate IL7. Involved in cell cycle regulation through binding the site II (HiNF-M) promoter region of H4 and activating transcription during cell growth. Antagonizes IRF1 transcriptional activation. The polypeptide is Interferon regulatory factor 2 (IRF2) (Homo sapiens (Human)).